We begin with the raw amino-acid sequence, 234 residues long: MRILLVEDETDLGMAIKKVLVSEKYVVDWVTDGSQAWDYLENQWTEYTLAIVDWLLPGLSGLELCQKLRTQGNSLPVLMLTALGEPENRVEGLDAGADDYLTKPFVMAELLARLRALQRRSPQFQPQILTLGNFSLDPSNNLLSVTISEPLNLERQEIALTVREFQIFQYLMQNPERIISGSKIRQQLWDLDEEPMSNVVAAQMRLIRRKLAQQNCPCPIKTVPGQGYRFTLSP.

A Response regulatory domain is found at 2 to 118 (RILLVEDETD…ELLARLRALQ (117 aa)). Aspartate 53 bears the 4-aspartylphosphate mark. Positions 126–232 (PQILTLGNFS…VPGQGYRFTL (107 aa)) form a DNA-binding region, ompR/PhoB-type.

Interacts with histidine kinase Hik2; may accept phosphate from Hik2.

Functionally, member of two-component regulatory system RppA/RppB, involved in the establishment of the appropriate stoichiometry between the 2 photosystems. It senses changes in the plastoquinone (PQ) redox poise. Another group shows this two-component pair, renamed NrsR/NrsS, controls the nickel-dependent expression of the nrsBACD operon; they suggest the photosystem-related activities seen earlier are due to the expression of NrsS (RppB) in the absence of its natural substrate NrsR (RppA). May accept phosphate from Hik2 in a possible Hik2/RppA two-component system. The sequence is that of Response regulator RppA from Synechocystis sp. (strain ATCC 27184 / PCC 6803 / Kazusa).